The following is a 593-amino-acid chain: Transmembrane 9 superfamily member 4 (593 aa).

The signal sequence occupies residues 1–25 (MVLLPSMTSLLLVFLFLYGVSPVIS). The Lumenal portion of the chain corresponds to 26–230 (DGSDHRYKVG…SMPHHLEIHW (205 aa)). The chain crosses the membrane as a helical span at residues 231-251 (FSIINSCVTVLLLTGFLATIL). The Cytoplasmic segment spans residues 252–303 (MRVLKNDFVKYAHDEEAVDDQEETGWKLIHGDVFRFPKHKSLLAAALGSGTQ). Residues 304 to 324 (LFTLAVFIFMLALVGVFYPYN) traverse the membrane as a helical segment. At 325–326 (RG) the chain is on the lumenal side. Residues 327–347 (ALFTALVVIYALTSGIAGYTA) form a helical membrane-spanning segment. Topologically, residues 348–366 (ASFYCQLEGTNWVRNVILT) are cytoplasmic. Residues 367-387 (GSLFCGPLLITFSFLNTVAIA) traverse the membrane as a helical segment. Residues 388–398 (YQATAALPFGT) are Lumenal-facing. A helical membrane pass occupies residues 399–419 (IVVIFLIWALVTSPLLILGGI). Over 420-453 (AGKNRKSEFQAPCRTTKYPREIPPMRWYRRTLPQ) the chain is Cytoplasmic. A helical transmembrane segment spans residues 454–474 (MAMAGFLPFSAIYIELYYIFA). The Lumenal portion of the chain corresponds to 475–486 (SVWGHRIYTIYS). Residues 487-507 (ILSIVFLILVIVTAFITVALT) form a helical membrane-spanning segment. Over 508–522 (YFQLAAEDHEWWWRS) the chain is Cytoplasmic. A helical transmembrane segment spans residues 523-543 (LLCGGSTGLFIYAYCLYYYYA). Residues 544 to 554 (RSDMSGFMQTS) lie on the Lumenal side of the membrane. The helical transmembrane segment at 555–575 (FFFGYMACICYGFFLMLGTIG) threads the bilayer. Residues 576 to 593 (FCASLLFVRHIYRSIKCE) are Cytoplasmic-facing. An Endoplasmic reticulum export signal motif is present at residues 582–587 (FVRHIY). The Golgi retention signal signature appears at 591 to 593 (KCE).

It belongs to the nonaspanin (TM9SF) (TC 9.A.2) family.

It is found in the endosome membrane. The protein resides in the golgi apparatus membrane. The protein is Transmembrane 9 superfamily member 4 of Arabidopsis thaliana (Mouse-ear cress).